A 439-amino-acid chain; its full sequence is Putative FBD-associated F-box protein At1g05080 (439 aa).

In terms of domain architecture, F-box spans 12–58; that stretch reads EDRISVLPEDLLVVILDLLPTKDVVATMILSKRWLSIWTMVRTLEYT. Residues 360–410 enclose the FBD domain; sequence SWKQPSHVPECLSSQLEIFEWRDYGDRIIEEEFLTYVLANSKRLKTATISL.

The protein is Putative FBD-associated F-box protein At1g05080 of Arabidopsis thaliana (Mouse-ear cress).